Reading from the N-terminus, the 947-residue chain is Bifunctional glutamine synthetase adenylyltransferase/adenylyl-removing enzyme (947 aa).

The interval 1 to 440 is adenylyl removase; the sequence is MTPLSSPLSQ…VFNELIGDDE (440 aa). The tract at residues 450 to 947 is adenylyl transferase; that stretch reads SEPWREVWQD…ASWRKWLVAV (498 aa).

This sequence belongs to the GlnE family. Requires Mg(2+) as cofactor.

The catalysed reaction is [glutamine synthetase]-O(4)-(5'-adenylyl)-L-tyrosine + phosphate = [glutamine synthetase]-L-tyrosine + ADP. It catalyses the reaction [glutamine synthetase]-L-tyrosine + ATP = [glutamine synthetase]-O(4)-(5'-adenylyl)-L-tyrosine + diphosphate. Involved in the regulation of glutamine synthetase GlnA, a key enzyme in the process to assimilate ammonia. When cellular nitrogen levels are high, the C-terminal adenylyl transferase (AT) inactivates GlnA by covalent transfer of an adenylyl group from ATP to specific tyrosine residue of GlnA, thus reducing its activity. Conversely, when nitrogen levels are low, the N-terminal adenylyl removase (AR) activates GlnA by removing the adenylyl group by phosphorolysis, increasing its activity. The regulatory region of GlnE binds the signal transduction protein PII (GlnB) which indicates the nitrogen status of the cell. The chain is Bifunctional glutamine synthetase adenylyltransferase/adenylyl-removing enzyme from Salmonella heidelberg (strain SL476).